The chain runs to 1233 residues: Structural maintenance of chromosomes protein 1A (1233 aa).

32 to 39 serves as a coordination point for ATP; it reads GPNGSGKS. Coiled coils occupy residues 104–124 and 163–503; these read EYKINNKVVQLHEYSEELEKL and ELAQ…KAEI. Residues 284–293 are compositionally biased toward basic and acidic residues; that stretch reads IKEKDSELNQ. Disordered stretches follow at residues 284 to 308 and 348 to 369; these read IKEKDSELNQKRPQYIKAKENTSHK and QEFEERMEEESQSQGRDLTLEE. 2 positions are modified to phosphoserine: Ser358 and Ser360. In terms of domain architecture, SMC hinge spans 515-629; it reads VYGRLIDLCQ…DNVEDARRIA (115 aa). 2 positions are modified to N6-acetyllysine: Lys648 and Lys713. Residues 667-935 adopt a coiled-coil conformation; sequence DEKAVDKLKE…RHNLLQACKM (269 aa). The interval 947–969 is disordered; the sequence is MDDISQEEGSSQGEESVSGSQRT. Positions 953–967 are enriched in low complexity; the sequence is EEGSSQGEESVSGSQ. Ser957, Ser962, Ser966, and Ser970 each carry phosphoserine. A coiled-coil region spans residues 988–1068; it reads EDLKDAQAEE…FEQIKKERFD (81 aa). At Lys1037 the chain carries N6-acetyllysine.

The protein belongs to the SMC family. SMC1 subfamily. Forms a heterodimer with SMC3 in cohesin complexes. Cohesin complexes are composed of the SMC1 (SMC1A or SMC1B) and SMC3 heterodimer attached via their SMC hinge domain, RAD21 which link them, and one STAG protein (STAG1, STAG2 or STAG3), which interacts with RAD21. In germ cell cohesin complexes, SMC1A is mutually exclusive with SMC1B. Interacts with STAG3. Found in a complex with CDCA5, SMC3 and RAD21, PDS5A/SCC-112 and PDS5B/APRIN. Found in a complex containing POLE and SMC3. Interacts with BRCA1, SYCP2, NDC80, RPGR and BRAT1. The cohesin complex interacts with the cohesin loading complex subunits NIPBL/Scc2 (via HEAT repeats) and MAU2/Scc4. NIPBL directly contacts all members of the complex, RAD21, SMC1A/B, SMC3 and STAG1. Post-translationally, phosphorylated upon ionizing radiation or DNA methylation. Phosphorylation of Ser-957 and Ser-966 activates it and is required for S-phase checkpoint activation. Ubiquitinated by the DCX(DCAF15) complex, leading to its degradation. As to expression, ubiquitous (at protein level).

It localises to the nucleus. The protein resides in the chromosome. The protein localises to the centromere. Functionally, involved in chromosome cohesion during cell cycle and in DNA repair. Involved in DNA repair via its interaction with BRCA1 and its related phosphorylation by ATM, and works as a downstream effector in the ATM/NBS1 branch of S-phase checkpoint. Central component of cohesin complex. The cohesin complex is required for the cohesion of sister chromatids after DNA replication. The cohesin complex apparently forms a large proteinaceous ring within which sister chromatids can be trapped. At anaphase, the complex is cleaved and dissociates from chromatin, allowing sister chromatids to segregate. The cohesin complex may also play a role in spindle pole assembly during mitosis. Involved in DNA repair via its interaction with BRCA1 and its related phosphorylation by ATM, or via its phosphorylation by ATR. Works as a downstream effector both in the ATM/NBS1 branch and in the ATR/MSH2 branch of S-phase checkpoint. The sequence is that of Structural maintenance of chromosomes protein 1A (Smc1a) from Mus musculus (Mouse).